We begin with the raw amino-acid sequence, 59 residues long: DNA-directed RNA polymerase subunit Rpo6 (59 aa).

Belongs to the archaeal Rpo6/eukaryotic RPB6 RNA polymerase subunit family. As to quaternary structure, part of the RNA polymerase complex.

It localises to the cytoplasm. It catalyses the reaction RNA(n) + a ribonucleoside 5'-triphosphate = RNA(n+1) + diphosphate. Functionally, DNA-dependent RNA polymerase (RNAP) catalyzes the transcription of DNA into RNA using the four ribonucleoside triphosphates as substrates. This Halorubrum lacusprofundi (strain ATCC 49239 / DSM 5036 / JCM 8891 / ACAM 34) protein is DNA-directed RNA polymerase subunit Rpo6.